Here is a 118-residue protein sequence, read N- to C-terminus: Vesicle-associated membrane protein 1 (118 aa).

Over residues 1 to 15 (MSAPAQPPAEGTEGA) the composition is skewed to low complexity. The disordered stretch occupies residues 1–36 (MSAPAQPPAEGTEGAAPGGGPPGPPPNMTSNRRLQQ). The Cytoplasmic segment spans residues 1 to 96 (MSAPAQPPAE…KRKYWWKNCK (96 aa)). A v-SNARE coiled-coil homology domain is found at 33–93 (RLQQTQAQVE…AKLKRKYWWK (61 aa)). Ser63 carries the post-translational modification Phosphoserine. The helical; Anchor for type IV membrane protein transmembrane segment at 97-116 (MMIMLGAICAIIVVVIVIYF) threads the bilayer. Topologically, residues 117 to 118 (FT) are vesicular.

The protein belongs to the synaptobrevin family. Interacts with VAPA and VAPB. Post-translationally, (Microbial infection) Targeted and hydrolyzed by C.botulinum neurotoxin type X (BoNT/X) which hydrolyzes the 68-Arg-|-Ala-69 bond and probably inhibits neurotransmitter release. It remains unknown whether BoNT/X is ever produced, or what organisms it targets. As to expression, highly expressed in the zona incerta and rostral periolivary region of the brain. Other neuroanatomical regions show negligible expression. Expressed in the retina, expression observed in the outer segments of the photoreceptors, in the outer and inner plexiform layers, and in a subset of ganglion cells.

Its subcellular location is the cytoplasmic vesicle. The protein resides in the secretory vesicle. The protein localises to the synaptic vesicle membrane. It localises to the synapse. It is found in the synaptosome. Its subcellular location is the cytoplasmic vesicle membrane. Its function is as follows. Involved in the targeting and/or fusion of transport vesicles to their target membrane. The chain is Vesicle-associated membrane protein 1 (Vamp1) from Mus musculus (Mouse).